The following is a 350-amino-acid chain: Patr class I histocompatibility antigen, alpha chain E (350 aa).

The signal sequence occupies residues 1–21 (MVDGTLLLLLSEALALTQTWA). The segment at 22 to 111 (GSHSLKYFHT…LRGYYNQSEA (90 aa)) is alpha-1. Residues 22–305 (GSHSLKYFHT…KPASQPTIPI (284 aa)) lie on the Extracellular side of the membrane. Residue N107 is glycosylated (N-linked (GlcNAc...) asparagine). The alpha-2 stretch occupies residues 112–203 (GSHTLQWMHG…EKGKETLLHL (92 aa)). 2 disulfide bridges follow: C122-C185 and C224-C280. Positions 204-295 (EPPKTHVTHH…GLPEPLTLRW (92 aa)) are alpha-3. An Ig-like C1-type domain is found at 206–294 (PKTHVTHHPI…EGLPEPLTLR (89 aa)). The connecting peptide stretch occupies residues 296–305 (KPASQPTIPI). The helical transmembrane segment at 306-329 (VGIIAGLVLLGSVVSGAVVAAVMW) threads the bilayer. Residues 330–350 (RKKSSGGKGRSYSKAEWSDSA) are Cytoplasmic-facing.

The protein belongs to the MHC class I family. In terms of assembly, heterodimer of an alpha chain and a beta chain (beta-2-microglobulin).

The protein localises to the membrane. In terms of biological role, preferably binds to a peptide derived from the signal sequence of most HLA-A, -B, -C and -G molecules. The chain is Patr class I histocompatibility antigen, alpha chain E (Patr-E) from Pan troglodytes (Chimpanzee).